We begin with the raw amino-acid sequence, 650 residues long: Chaperone protein HtpG (650 aa).

Residues methionine 1–arginine 344 are a; substrate-binding. Residues glutamate 345–arginine 582 are b. A c region spans residues leucine 583–alanine 650.

It belongs to the heat shock protein 90 family. As to quaternary structure, homodimer.

It localises to the cytoplasm. In terms of biological role, molecular chaperone. Has ATPase activity. The protein is Chaperone protein HtpG of Acidovorax sp. (strain JS42).